The sequence spans 88 residues: Small ribosomal subunit protein uS15 (88 aa).

This sequence belongs to the universal ribosomal protein uS15 family. As to quaternary structure, part of the 30S ribosomal subunit. Forms a bridge to the 50S subunit in the 70S ribosome, contacting the 23S rRNA.

Its function is as follows. One of the primary rRNA binding proteins, it binds directly to 16S rRNA where it helps nucleate assembly of the platform of the 30S subunit by binding and bridging several RNA helices of the 16S rRNA. Forms an intersubunit bridge (bridge B4) with the 23S rRNA of the 50S subunit in the ribosome. The chain is Small ribosomal subunit protein uS15 from Leptospira interrogans serogroup Icterohaemorrhagiae serovar copenhageni (strain Fiocruz L1-130).